The sequence spans 141 residues: Large ribosomal subunit protein bL17 (141 aa).

It belongs to the bacterial ribosomal protein bL17 family. In terms of assembly, part of the 50S ribosomal subunit. Contacts protein L32.

The chain is Large ribosomal subunit protein bL17 from Sinorhizobium medicae (strain WSM419) (Ensifer medicae).